Consider the following 354-residue polypeptide: S-adenosylmethionine:tRNA ribosyltransferase-isomerase (354 aa).

This sequence belongs to the QueA family. As to quaternary structure, monomer.

It is found in the cytoplasm. The catalysed reaction is 7-aminomethyl-7-carbaguanosine(34) in tRNA + S-adenosyl-L-methionine = epoxyqueuosine(34) in tRNA + adenine + L-methionine + 2 H(+). It participates in tRNA modification; tRNA-queuosine biosynthesis. Its function is as follows. Transfers and isomerizes the ribose moiety from AdoMet to the 7-aminomethyl group of 7-deazaguanine (preQ1-tRNA) to give epoxyqueuosine (oQ-tRNA). The chain is S-adenosylmethionine:tRNA ribosyltransferase-isomerase from Salmonella schwarzengrund (strain CVM19633).